Reading from the N-terminus, the 941-residue chain is Cilia- and flagella-associated protein 69 (941 aa).

Over residues M1–A10 the composition is skewed to low complexity. The tract at residues M1–S23 is disordered.

The protein localises to the cell projection. It is found in the cilium. It localises to the flagellum. Cilium- and flagellum-associated protein. In the olfactory epithelium, regulates the speed of activation and termination of the odor response and thus contributes to the robustness of olfactory transduction pathways. Required for sperm flagellum assembly and stability. The chain is Cilia- and flagella-associated protein 69 from Papio anubis (Olive baboon).